We begin with the raw amino-acid sequence, 284 residues long: MYVVSTKQMLNNAQRGGYAVPAFNIHNLETMQVVVETAASMHAPVIIAGTPGTFTHVGTENLMALVSAMAKQYHHPLAIHLDHHTKFDDIAQKVRSGVRSVMIDASHLPFAQNISRVKEVVDFCHRFDVSVEAELGQLGGQEDDVQVNEADAFYTNPVQAREFAEATGIDSLAVAIGTAHGMYARAPALDFSRLENIRQWVNLPLVLHGASGLSTKDIQQTIKLGICKINVATELKNAFSQALKNYLTEHPEATDPRDYLQSAKSAMRDVVSKVIADCGCEGRA.

The active-site Proton donor is aspartate 82. 2 residues coordinate Zn(2+): histidine 83 and histidine 180. Glycine 181 contributes to the dihydroxyacetone phosphate binding site. Histidine 208 serves as a coordination point for Zn(2+). Residues 209–211 and 230–233 each bind dihydroxyacetone phosphate; these read GAS and NVAT.

It belongs to the class II fructose-bisphosphate aldolase family. TagBP aldolase GatY subfamily. Forms a complex with GatZ. Requires Zn(2+) as cofactor.

It carries out the reaction D-tagatofuranose 1,6-bisphosphate = D-glyceraldehyde 3-phosphate + dihydroxyacetone phosphate. It participates in carbohydrate metabolism; D-tagatose 6-phosphate degradation; D-glyceraldehyde 3-phosphate and glycerone phosphate from D-tagatose 6-phosphate: step 2/2. Its function is as follows. Catalytic subunit of the tagatose-1,6-bisphosphate aldolase GatYZ, which catalyzes the reversible aldol condensation of dihydroxyacetone phosphate (DHAP or glycerone-phosphate) with glyceraldehyde 3-phosphate (G3P) to produce tagatose 1,6-bisphosphate (TBP). Requires GatZ subunit for full activity and stability. Is involved in the catabolism of galactitol. This is D-tagatose-1,6-bisphosphate aldolase subunit GatY from Escherichia coli O6:K15:H31 (strain 536 / UPEC).